We begin with the raw amino-acid sequence, 458 residues long: Transcription termination factor Rho (458 aa).

The segment at 1 to 23 (MNTTNKESTAELNNTESNNNYNN) is disordered. The span at 10–23 (AELNNTESNNNYNN) shows a compositional bias: low complexity. Residues 78–153 (LIVGEGVLEV…LKVNRVNFED (76 aa)) form the Rho RNA-BD domain. ATP is bound by residues 201 to 206 (GKGQRA), 213 to 218 (RTGKTV), and Arg-244.

Belongs to the Rho family. In terms of assembly, homohexamer. The homohexamer assembles into an open ring structure.

Its function is as follows. Facilitates transcription termination by a mechanism that involves Rho binding to the nascent RNA, activation of Rho's RNA-dependent ATPase activity, and release of the mRNA from the DNA template. This Rickettsia conorii (strain ATCC VR-613 / Malish 7) protein is Transcription termination factor Rho.